Reading from the N-terminus, the 484-residue chain is Hemogen (484 aa).

Residues 1–25 are compositionally biased toward basic and acidic residues; the sequence is MDLGKDQSHLKHHQTPDPHQEENHS. Disordered stretches follow at residues 1-32 and 44-91; these read MDLGKDQSHLKHHQTPDPHQEENHSPEVIGTW and KAEV…PQPQ. The interval 7–87 is necessary for nuclear localization; the sequence is QSHLKHHQTP…RQQNTELKVE (81 aa). Over residues 61–79 the composition is skewed to basic residues; sequence KKRKQQRTGKGNRRGRKRQ. A phosphoserine mark is found at Ser123, Ser159, Ser181, Ser188, and Ser201. Thr246 carries the phosphothreonine modification. Disordered regions lie at residues 265 to 290, 306 to 369, and 386 to 471; these read DVPKGYILDTDQNPAEPEEYNETDQG, EPKD…YSPE, and QETS…ILNE. Residues 306–320 are compositionally biased toward basic and acidic residues; that stretch reads EPKDLSTKTHQESAE. Residues Ser349 and Ser353 each carry the phosphoserine modification. Thr360 carries the phosphothreonine modification. Phosphoserine occurs at positions 363 and 367. 3 stretches are compositionally biased toward basic and acidic residues: residues 413-428, 438-447, and 454-463; these read YKNKDVPKECFPEPHQ, PKAHQEDAKD, and EMKEKPKEEP.

Expressed in hematopoietic precursor cells, thyroid and spermatids (at protein level). Expressed in bone marrow, testis, thymus. Expressed in prostate cancer and ovarian cancer. Also expressed in thymus and thyroid tumors, non-Hodgkin lymphoma, various leukemia cell lines, peripheral blood mononuclear cells (PBMCs) and bone marrow mononuclear cells (BMMCs) of patients with leukemia.

Its subcellular location is the nucleus. Its function is as follows. Regulates the proliferation and differentiation of hematopoietic cells. Overexpression block the TPA-induced megakaryocytic differentiation in the K562 cell model. May also prevent cell apoptosis through the activation of the nuclear factor-kappa B (NF-kB). The protein is Hemogen (HEMGN) of Homo sapiens (Human).